The primary structure comprises 153 residues: 6,7-dimethyl-8-ribityllumazine synthase (153 aa).

Residues Phe-21, 55 to 57 (AFE), and 79 to 81 (TVI) each bind 5-amino-6-(D-ribitylamino)uracil. 84–85 (AT) provides a ligand contact to (2S)-2-hydroxy-3-oxobutyl phosphate. The active-site Proton donor is the His-87. Phe-112 is a binding site for 5-amino-6-(D-ribitylamino)uracil. (2S)-2-hydroxy-3-oxobutyl phosphate is bound at residue Arg-126.

The protein belongs to the DMRL synthase family. As to quaternary structure, forms an icosahedral capsid composed of 60 subunits, arranged as a dodecamer of pentamers.

The catalysed reaction is (2S)-2-hydroxy-3-oxobutyl phosphate + 5-amino-6-(D-ribitylamino)uracil = 6,7-dimethyl-8-(1-D-ribityl)lumazine + phosphate + 2 H2O + H(+). The protein operates within cofactor biosynthesis; riboflavin biosynthesis; riboflavin from 2-hydroxy-3-oxobutyl phosphate and 5-amino-6-(D-ribitylamino)uracil: step 1/2. In terms of biological role, catalyzes the formation of 6,7-dimethyl-8-ribityllumazine by condensation of 5-amino-6-(D-ribitylamino)uracil with 3,4-dihydroxy-2-butanone 4-phosphate. This is the penultimate step in the biosynthesis of riboflavin. In Bacillus cereus (strain 03BB102), this protein is 6,7-dimethyl-8-ribityllumazine synthase.